The sequence spans 145 residues: Transmembrane protein CCDC163 (145 aa).

The helical transmembrane segment at Leu-38–Leu-54 threads the bilayer.

Its subcellular location is the membrane. The sequence is that of Transmembrane protein CCDC163 from Homo sapiens (Human).